We begin with the raw amino-acid sequence, 191 residues long: Gastrokine-3 (191 aa).

The signal sequence occupies residues 1–30 (MPLHSLERDNMRRLIAPSILVTVFLVPALA). An N-linked (GlcNAc...) asparagine glycan is attached at Asn33. The BRICHOS domain maps to 63–155 (NSVQSEWDGV…LCRAVPTYFA (93 aa)). An intrachain disulfide couples Cys90 to Cys147.

It belongs to the gastrokine family. In terms of tissue distribution, expressed in stomach. Present in mucus cells at the base of antral glands, and Brunner glands of the duodenum. Present at lower levels in the mucus neck cell region of the fundus (at protein level).

It is found in the secreted. Its function is as follows. Inhibits gastric epithelial cell proliferation. In Mus musculus (Mouse), this protein is Gastrokine-3 (Gkn3).